The sequence spans 882 residues: DNA mismatch repair protein MutS (882 aa).

Position 626 to 633 (Gly626 to Ser633) interacts with ATP.

This sequence belongs to the DNA mismatch repair MutS family.

This protein is involved in the repair of mismatches in DNA. It is possible that it carries out the mismatch recognition step. This protein has a weak ATPase activity. This is DNA mismatch repair protein MutS from Anaeromyxobacter sp. (strain Fw109-5).